Here is a 316-residue protein sequence, read N- to C-terminus: Ribosomal protein L11 methyltransferase (316 aa).

T157, G178, D200, and N243 together coordinate S-adenosyl-L-methionine.

It belongs to the methyltransferase superfamily. PrmA family.

It localises to the cytoplasm. The catalysed reaction is L-lysyl-[protein] + 3 S-adenosyl-L-methionine = N(6),N(6),N(6)-trimethyl-L-lysyl-[protein] + 3 S-adenosyl-L-homocysteine + 3 H(+). Its function is as follows. Methylates ribosomal protein L11. This is Ribosomal protein L11 methyltransferase from Streptococcus pneumoniae serotype 2 (strain D39 / NCTC 7466).